Here is a 293-residue protein sequence, read N- to C-terminus: Elongation factor Ts (293 aa).

The tract at residues 80–83 (TDFV) is involved in Mg(2+) ion dislocation from EF-Tu.

The protein belongs to the EF-Ts family.

It is found in the cytoplasm. Its function is as follows. Associates with the EF-Tu.GDP complex and induces the exchange of GDP to GTP. It remains bound to the aminoacyl-tRNA.EF-Tu.GTP complex up to the GTP hydrolysis stage on the ribosome. This Burkholderia ambifaria (strain MC40-6) protein is Elongation factor Ts.